Consider the following 465-residue polypeptide: Cruciferin CRU4 (465 aa).

The N-terminal stretch at 1–22 (MGPTSLLSFFFTFLTLFHGFTA) is a signal peptide. Intrachain disulfides connect cysteine 29–cysteine 62 and cysteine 105–cysteine 283. 2 Cupin type-1 domains span residues 34-236 (LNAL…ETAQ) and 289-438 (ENLD…QEAR). Residue threonine 108 is modified to Phosphothreonine. Residues 112-135 (SPVFGQGQGQEQGQGQGQGQGQGF) are disordered. The span at 117 to 133 (QGQGQEQGQGQGQGQGQ) shows a compositional bias: gly residues. Position 306 is a phosphotyrosine (tyrosine 306). 2 positions are modified to phosphoserine: serine 308 and serine 443.

The protein belongs to the 11S seed storage protein (globulins) family. Heterohexamer; each subunit is composed of an acidic and a basic chain derived from a single precursor and linked by a disulfide bond.

It localises to the rough endoplasmic reticulum. This is a seed storage protein. This chain is Cruciferin CRU4 (CRU4), found in Brassica napus (Rape).